The sequence spans 360 residues: MNARHARYPFLGDARDAVEEAGVDLARVVTEDDAVVERARERVVSALTDGTIGEPAATVSTRVEVLSYPVARVLVSIVDESVLVRKYATAEADAAYDRFTADESTDTDLKSVSDTTRVSRDTLLSEFDLRAHVHATPDAHTVDVPTYLLLASSLRDDDWRLVNRALDDGRVPVTDAELDTLIREAIRERVADGLPLSVPDQIADALDEPVAAIQDALADLDLTREIDTVVPELFPPCMKHLLDQVQRGDHLPHHARFAITSFLSNVGLSTDEIVDIYEVNPGFGEEMTRYQTDHIQGDSSPTEYTAPSCATMKAYGNCVNPDDLCDAINHPLSYYEVKLDDGDDDDLADWRDREDDDSPD.

Positions 237, 309, 318, and 325 each coordinate [4Fe-4S] cluster. A disordered region spans residues 340–360; it reads DDGDDDDLADWRDREDDDSPD.

It belongs to the eukaryotic-type primase large subunit family. As to quaternary structure, heterodimer of a small subunit (PriS) and a large subunit (PriL). [4Fe-4S] cluster serves as cofactor.

Regulatory subunit of DNA primase, an RNA polymerase that catalyzes the synthesis of short RNA molecules used as primers for DNA polymerase during DNA replication. Stabilizes and modulates the activity of the small subunit, increasing the rate of DNA synthesis, and conferring RNA synthesis capability. The DNA polymerase activity may enable DNA primase to also catalyze primer extension after primer synthesis. May also play a role in DNA repair. In Halobacterium salinarum (strain ATCC 29341 / DSM 671 / R1), this protein is DNA primase large subunit PriL.